The following is a 279-amino-acid chain: MMTQMNYTGKVKRVAIIANGKYQSKRVASKLFSVFKDDPDFYLSKKNPDIVISIGGDGMLLSAFHMYEKELDKVRFVGIHTGHLGFYTDYRDFEVDKLIDNLRKDKGEQISYPILKVAITLDDGRVVKARALNEATVKRIEKTMVADVIINHVKFESFRGDGISVSTPTGSTAYNKSLGGAVLHPTIEALQLTEISSLNNRVFRTLGSSIIIPKKDKIELVPKRLGIYTISIDNKTYQLKNVTKVEYFIDDEKIHFVSSPSHTSFWERVKDAFIGETDS.

Asp-57 functions as the Proton acceptor in the catalytic mechanism. Residues 57-58 (DG), 133-134 (NE), Arg-159, Asp-161, and 172-177 (TAYNKS) each bind NAD(+).

Belongs to the NAD kinase family. A divalent metal cation is required as a cofactor.

It is found in the cytoplasm. The enzyme catalyses NAD(+) + ATP = ADP + NADP(+) + H(+). Its function is as follows. Involved in the regulation of the intracellular balance of NAD and NADP, and is a key enzyme in the biosynthesis of NADP. Catalyzes specifically the phosphorylation on 2'-hydroxyl of the adenosine moiety of NAD to yield NADP. This Streptococcus pyogenes serotype M12 (strain MGAS2096) protein is NAD kinase.